Reading from the N-terminus, the 198-residue chain is Ribonuclease HII (198 aa).

In terms of domain architecture, RNase H type-2 spans 2–192; it reads MYYCGIDEAG…IKKIIDNQKN (191 aa). A divalent metal cation is bound by residues Asp8, Glu9, and Asp101.

It belongs to the RNase HII family. The cofactor is Mn(2+). Requires Mg(2+) as cofactor.

The protein localises to the cytoplasm. It catalyses the reaction Endonucleolytic cleavage to 5'-phosphomonoester.. Endonuclease that specifically degrades the RNA of RNA-DNA hybrids. This Natranaerobius thermophilus (strain ATCC BAA-1301 / DSM 18059 / JW/NM-WN-LF) protein is Ribonuclease HII.